The chain runs to 335 residues: MWAVLSLLCAGAWLLGPPACGASNLAVSSFEKLHFKSWMVQHQKKYSLEEYHHRLQVFVSNWRKINAHNAGNHTFKLGLNQFSDMSFDEIRHKYLWSEPQNCSATKGNYLRGTGPYPPSMDWRKKGNFVSPVKNQGSCGSCWTFSTTGALESAVAIATGKMLSLAEQQLVDCAQNFNNHGCQGGLPSQAFEYIRYNKGIMGEDTYPYKGQDDHCKFQPDKAIAFVKDVANITMNDEEAMVEAVALYNPVSFAFEVTNDFLMYRKGIYSSTSCHKTPDKVNHAVLAVGYGEENGIPYWIVKNSWGPQWGMNGYFLIERGKNMCGLAACASYPIPLV.

Positions 1 to 22 (MWAVLSLLCAGAWLLGPPACGA) are cleaved as a signal peptide. The propeptide occupies 23-97 (SNLAVSSFEK…DEIRHKYLWS (75 aa)). Asn-72 and Asn-101 each carry an N-linked (GlcNAc...) asparagine glycan. Cystine bridges form between Cys-102/Cys-327, Cys-138/Cys-181, Cys-172/Cys-214, and Cys-272/Cys-322. Positions 107 to 115 (GNYLRGTGP) are excised as a propeptide. Cys-141 is a catalytic residue. Asn-230 is a glycosylation site (N-linked (GlcNAc...) asparagine). Catalysis depends on residues His-281 and Asn-301.

The protein belongs to the peptidase C1 family. Composed of cathepsin H and mini chain; disulfide-linked. Cathepsin H may be split into heavy and light chain. All chains are held together by disulfide bonds.

The protein resides in the lysosome. The enzyme catalyses Hydrolysis of proteins, acting as an aminopeptidase (notably, cleaving Arg-|-Xaa bonds) as well as an endopeptidase.. Functionally, important for the overall degradation of proteins in lysosomes. The chain is Pro-cathepsin H (CTSH) from Sus scrofa (Pig).